Here is a 254-residue protein sequence, read N- to C-terminus: 5'-nucleotidase SurE (254 aa).

Positions 8, 9, 38, and 91 each coordinate a divalent metal cation.

It belongs to the SurE nucleotidase family. A divalent metal cation serves as cofactor.

It localises to the cytoplasm. It carries out the reaction a ribonucleoside 5'-phosphate + H2O = a ribonucleoside + phosphate. Functionally, nucleotidase that shows phosphatase activity on nucleoside 5'-monophosphates. In Anaeromyxobacter sp. (strain Fw109-5), this protein is 5'-nucleotidase SurE.